The primary structure comprises 409 residues: Arginine deiminase (409 aa).

Residue cysteine 397 is the Amidino-cysteine intermediate of the active site.

Belongs to the arginine deiminase family.

It is found in the cytoplasm. It catalyses the reaction L-arginine + H2O = L-citrulline + NH4(+). The protein operates within amino-acid degradation; L-arginine degradation via ADI pathway; carbamoyl phosphate from L-arginine: step 1/2. The protein is Arginine deiminase (arcA) of Metamycoplasma hominis (Mycoplasma hominis).